Here is a 147-residue protein sequence, read N- to C-terminus: Urease accessory protein UreE (147 aa).

It belongs to the UreE family.

Its subcellular location is the cytoplasm. Its function is as follows. Involved in urease metallocenter assembly. Binds nickel. Probably functions as a nickel donor during metallocenter assembly. This chain is Urease accessory protein UreE, found in Nostoc sp. (strain PCC 7120 / SAG 25.82 / UTEX 2576).